Reading from the N-terminus, the 387-residue chain is Phosphoglycerate kinase (387 aa).

Substrate is bound by residues 21–23 (DLN), Arg-36, 59–62 (HLGR), Arg-113, and Arg-146. ATP-binding positions include Lys-197, Glu-314, and 340–343 (GGDT).

This sequence belongs to the phosphoglycerate kinase family. In terms of assembly, monomer.

It is found in the cytoplasm. The enzyme catalyses (2R)-3-phosphoglycerate + ATP = (2R)-3-phospho-glyceroyl phosphate + ADP. It participates in carbohydrate degradation; glycolysis; pyruvate from D-glyceraldehyde 3-phosphate: step 2/5. In Pasteurella multocida (strain Pm70), this protein is Phosphoglycerate kinase (pgk).